The following is a 274-amino-acid chain: Penicillin-insensitive murein endopeptidase (274 aa).

An N-terminal signal peptide occupies residues 1–19; that stretch reads MKKTAIALLAWFVSSASLA. Disulfide bonds link C44–C265, C187–C235, and C216–C223. Zn(2+) is bound by residues H110, H113, D120, D147, H150, and H211. The disordered stretch occupies residues 225–274; that stretch reads DQPLPPPGDGCGAELQSWFEPPKLGTTKPEKKTPPPLPPSCQALLDEHVL.

This sequence belongs to the peptidase M74 family. As to quaternary structure, dimer. Zn(2+) serves as cofactor.

The protein resides in the periplasm. Murein endopeptidase that cleaves the D-alanyl-meso-2,6-diamino-pimelyl amide bond that connects peptidoglycan strands. Likely plays a role in the removal of murein from the sacculus. The protein is Penicillin-insensitive murein endopeptidase of Salmonella paratyphi B (strain ATCC BAA-1250 / SPB7).